The chain runs to 127 residues: Fluoride-specific ion channel FluC (127 aa).

A run of 4 helical transmembrane segments spans residues 4 to 24 (LLLA…LLSM), 35 to 55 (LGTL…FAWF), 71 to 91 (TGFC…VFLL), and 103 to 123 (VFVN…LFSA). Na(+)-binding residues include G75 and T78.

This sequence belongs to the fluoride channel Fluc/FEX (TC 1.A.43) family.

It is found in the cell inner membrane. The catalysed reaction is fluoride(in) = fluoride(out). Its activity is regulated as follows. Na(+) is not transported, but it plays an essential structural role and its presence is essential for fluoride channel function. Fluoride-specific ion channel. Important for reducing fluoride concentration in the cell, thus reducing its toxicity. The chain is Fluoride-specific ion channel FluC from Escherichia coli O17:K52:H18 (strain UMN026 / ExPEC).